Here is a 464-residue protein sequence, read N- to C-terminus: Dihydrolipoyl dehydrogenase (464 aa).

Residues 33 to 41 (EPKYWGGVC), Lys50, and Gly113 contribute to the FAD site. Cys41 and Cys46 form a disulfide bridge. Residues 178–182 (GAGAI), Glu201, and 266–269 (AIGF) contribute to the NAD(+) site. Residues Asp309 and Ala317 each contribute to the FAD site. The active-site Proton acceptor is His443.

This sequence belongs to the class-I pyridine nucleotide-disulfide oxidoreductase family. In terms of assembly, homodimer. Part of the PDH complex, consisting of multiple copies of AceE (E1), DlaT (E2) and Lpd (E3), and of the BCKADH complex, consisting of multiple copies of BkdA/BkdB (E1), BkdC (E2) and Lpd (E3). The cofactor is FAD.

Its subcellular location is the cytoplasm. The catalysed reaction is N(6)-[(R)-dihydrolipoyl]-L-lysyl-[protein] + NAD(+) = N(6)-[(R)-lipoyl]-L-lysyl-[protein] + NADH + H(+). Lipoamide dehydrogenase is a component of the alpha-ketoacid dehydrogenase complexes. Catalyzes the reoxidation of dihydrolipoyl groups which are covalently attached to the lipoate acyltransferase components (E2) of the complexes. The chain is Dihydrolipoyl dehydrogenase (lpd) from Mycobacterium bovis (strain ATCC BAA-935 / AF2122/97).